An 821-amino-acid polypeptide reads, in one-letter code: Kinetochore protein SLK19 (821 aa).

Disordered stretches follow at residues 1 to 52 (MNEV…SQFV) and 99 to 153 (FDDK…NDKE). Thr-7 bears the Phosphothreonine; by CDC28 mark. Residues 15–51 (QAQQREQNSENCSQERNPRTFNSEPDSSFNSPGSSQF) are compositionally biased toward polar residues. Composition is skewed to basic and acidic residues over residues 99-122 (FDDK…DKHV) and 136-153 (SSEK…NDKE). Phosphoserine is present on residues Ser-188 and Ser-189. Ser-201 carries the phosphoserine; by CDC28 modification. Ser-216 is subject to Phosphoserine. Residue Thr-273 is modified to Phosphothreonine. 2 disordered regions span residues 274–298 (PLYE…DDNQ) and 699–720 (EQNN…RDDE). Ser-283 is modified (phosphoserine). Positions 310-821 (AKRNEELTDQ…LLKLLENEKK (512 aa)) form a coiled coil.

Cleaved by ESP1 at the onset of anaphase. Post-translationally, phosphorylated by CDC5/Polo-like kinase at the onset of anaphase. Phosphorylation takes places at proximity to cleavage sites and is required for an efficient cleavage by ESP1. Phosphorylated also by CDC28.

Its subcellular location is the chromosome. It localises to the centromere. The protein resides in the kinetochore. The protein localises to the cytoplasm. It is found in the cytoskeleton. Its subcellular location is the microtubule organizing center. It localises to the spindle pole body. Its function is as follows. Has a role in spindle assembly and stability. Required to ensure a timely exit form mitosis. Essential to maintain pre-anaphase spindle polarity. Associates to the plus ends of the microtubules at the kinetochore and spindle midzone. A component of the FEAR (CDC14 Early Anaphase Release) network which promotes CDC14 release from the nucleolus during early anaphase. Required for proper chromosome segregation during meiosis I where it prevents premature sister chromatid separation. The chain is Kinetochore protein SLK19 (SLK19) from Saccharomyces cerevisiae (strain ATCC 204508 / S288c) (Baker's yeast).